Here is a 310-residue protein sequence, read N- to C-terminus: Ribosomal RNA small subunit methyltransferase H (310 aa).

S-adenosyl-L-methionine contacts are provided by residues 33–35 (AGH), D53, F79, D100, and Q107.

The protein belongs to the methyltransferase superfamily. RsmH family.

It localises to the cytoplasm. The catalysed reaction is cytidine(1402) in 16S rRNA + S-adenosyl-L-methionine = N(4)-methylcytidine(1402) in 16S rRNA + S-adenosyl-L-homocysteine + H(+). Specifically methylates the N4 position of cytidine in position 1402 (C1402) of 16S rRNA. This chain is Ribosomal RNA small subunit methyltransferase H, found in Desulfitobacterium hafniense (strain DSM 10664 / DCB-2).